Here is a 451-residue protein sequence, read N- to C-terminus: MREVISIHIGQAGIQVGNACWELYCLEHGIQPDGQMPSDKTIGGGDDAFNTFFSETGAGKHVPRCVFLDLEPTVIDEVRTGTYRQLFHPEQLISGKEDAANNFARGHYTIGKEIVDLCLDRIRKLADNCTGLQGFLVFNAVGGGTGSGLGSLLLERLSVDYGKKSKLGFTVYPSPQVSTAVVEPYNSVLSTHSLLEHTDVSVMLDNEAVYDICRRSLDIERPTYTNLNRLIAQVISSLTASLRFDGALNVDVTEFQTNLVPYPRIHFMLSSYSPVISAEKAYHEQLSVAEITNSAFEPASMMAKCDPRHGKYMACCLMYRGDVVPKDVNAAVATIKTKRTIQFVDWCPTGFKCGINYQPPTVVPGGDLAKVQRAVCMISNSTAIAEVFSRLDHKFDLMYAKRAFVHWYVGEGMEEGEFSEAREDLAALEKDYEEVGAESAEADGEDEGEEY.

GTP is bound at residue Gln11. At Lys40 the chain carries N6-acetyllysine. 6 residues coordinate GTP: Glu71, Gly144, Thr145, Thr179, Asn206, and Asn228. Glu71 is a Mg(2+) binding site. Glu254 is a catalytic residue.

It belongs to the tubulin family. As to quaternary structure, dimer of alpha and beta chains. A typical microtubule is a hollow water-filled tube with an outer diameter of 25 nm and an inner diameter of 15 nM. Alpha-beta heterodimers associate head-to-tail to form protofilaments running lengthwise along the microtubule wall with the beta-tubulin subunit facing the microtubule plus end conferring a structural polarity. Microtubules usually have 13 protofilaments but different protofilament numbers can be found in some organisms and specialized cells. Mg(2+) is required as a cofactor. Undergoes a tyrosination/detyrosination cycle, the cyclic removal and re-addition of a C-terminal tyrosine residue by the enzymes tubulin tyrosine carboxypeptidase (TTCP) and tubulin tyrosine ligase (TTL), respectively. In terms of processing, acetylation of alpha chains at Lys-40 stabilizes microtubules and affects affinity and processivity of microtubule motors. This modification has a role in multiple cellular functions, ranging from cell motility, cell cycle progression or cell differentiation to intracellular trafficking and signaling.

The protein localises to the cytoplasm. It is found in the cytoskeleton. The catalysed reaction is GTP + H2O = GDP + phosphate + H(+). Its function is as follows. Tubulin is the major constituent of microtubules, a cylinder consisting of laterally associated linear protofilaments composed of alpha- and beta-tubulin heterodimers. Microtubules grow by the addition of GTP-tubulin dimers to the microtubule end, where a stabilizing cap forms. Below the cap, tubulin dimers are in GDP-bound state, owing to GTPase activity of alpha-tubulin. This is Tubulin alpha chain (TUBA) from Chlorella vulgaris (Green alga).